Consider the following 600-residue polypeptide: Putative heme-binding protein NP_2262A (600 aa).

Residue H180 participates in heme binding. Positions 261–289 are disordered; sequence TSETGHGGADSQTSSESSGGRPSTDPSHD. Positions 270 to 285 are enriched in polar residues; the sequence is DSQTSSESSGGRPSTD. In terms of domain architecture, ABM spans 510–598; that stretch reads GTMGMFYTVK…VLADRPRHVF (89 aa).

It in the N-terminal section; belongs to the ChdC family.

This Natronomonas pharaonis (strain ATCC 35678 / DSM 2160 / CIP 103997 / JCM 8858 / NBRC 14720 / NCIMB 2260 / Gabara) (Halobacterium pharaonis) protein is Putative heme-binding protein NP_2262A.